The primary structure comprises 536 residues: Chromosomal replication initiator protein DnaA (536 aa).

A domain I, interacts with DnaA modulators region spans residues methionine 1 to proline 72. The domain II stretch occupies residues proline 72–serine 199. Residues arginine 97–asparagine 121 form a disordered region. Residues proline 105–asparagine 121 show a composition bias toward low complexity. Residues lysine 200–serine 416 form a domain III, AAA+ region region. Residues glycine 244, glycine 246, lysine 247, and threonine 248 each contribute to the ATP site. The segment at lysine 417–glycine 536 is domain IV, binds dsDNA.

It belongs to the DnaA family. As to quaternary structure, oligomerizes as a right-handed, spiral filament on DNA at oriC.

Its subcellular location is the cytoplasm. In terms of biological role, plays an essential role in the initiation and regulation of chromosomal replication. ATP-DnaA binds to the origin of replication (oriC) to initiate formation of the DNA replication initiation complex once per cell cycle. Binds the DnaA box (a 9 base pair repeat at the origin) and separates the double-stranded (ds)DNA. Forms a right-handed helical filament on oriC DNA; dsDNA binds to the exterior of the filament while single-stranded (ss)DNA is stabiized in the filament's interior. The ATP-DnaA-oriC complex binds and stabilizes one strand of the AT-rich DNA unwinding element (DUE), permitting loading of DNA polymerase. After initiation quickly degrades to an ADP-DnaA complex that is not apt for DNA replication. Binds acidic phospholipids. The protein is Chromosomal replication initiator protein DnaA of Burkholderia thailandensis (strain ATCC 700388 / DSM 13276 / CCUG 48851 / CIP 106301 / E264).